Reading from the N-terminus, the 175-residue chain is Bifunctional protein PyrR (175 aa).

Positions 97–109 match the PRPP-binding motif; that stretch reads IVLIDDVLFTGRT.

Belongs to the purine/pyrimidine phosphoribosyltransferase family. PyrR subfamily. Homodimer and homohexamer; in equilibrium.

It catalyses the reaction UMP + diphosphate = 5-phospho-alpha-D-ribose 1-diphosphate + uracil. Its function is as follows. Regulates transcriptional attenuation of the pyrimidine nucleotide (pyr) operon by binding in a uridine-dependent manner to specific sites on pyr mRNA. This disrupts an antiterminator hairpin in the RNA and favors formation of a downstream transcription terminator, leading to a reduced expression of downstream genes. Functionally, also displays a weak uracil phosphoribosyltransferase activity which is not physiologically significant. The sequence is that of Bifunctional protein PyrR from Leuconostoc mesenteroides subsp. mesenteroides (strain ATCC 8293 / DSM 20343 / BCRC 11652 / CCM 1803 / JCM 6124 / NCDO 523 / NBRC 100496 / NCIMB 8023 / NCTC 12954 / NRRL B-1118 / 37Y).